The sequence spans 199 residues: Dephospho-CoA kinase (199 aa).

The region spanning 4 to 199 (VLGITGGIAT…KWLEEQIGKK (196 aa)) is the DPCK domain. 12 to 17 (ATGKST) serves as a coordination point for ATP.

This sequence belongs to the CoaE family.

Its subcellular location is the cytoplasm. The catalysed reaction is 3'-dephospho-CoA + ATP = ADP + CoA + H(+). It functions in the pathway cofactor biosynthesis; coenzyme A biosynthesis; CoA from (R)-pantothenate: step 5/5. Catalyzes the phosphorylation of the 3'-hydroxyl group of dephosphocoenzyme A to form coenzyme A. The sequence is that of Dephospho-CoA kinase from Enterococcus faecalis (strain ATCC 700802 / V583).